A 337-amino-acid chain; its full sequence is Phosphoribosylformylglycinamidine cyclo-ligase (337 aa).

The protein belongs to the AIR synthase family.

The protein localises to the cytoplasm. The enzyme catalyses 2-formamido-N(1)-(5-O-phospho-beta-D-ribosyl)acetamidine + ATP = 5-amino-1-(5-phospho-beta-D-ribosyl)imidazole + ADP + phosphate + H(+). It functions in the pathway purine metabolism; IMP biosynthesis via de novo pathway; 5-amino-1-(5-phospho-D-ribosyl)imidazole from N(2)-formyl-N(1)-(5-phospho-D-ribosyl)glycinamide: step 2/2. This is Phosphoribosylformylglycinamidine cyclo-ligase from Pseudothermotoga lettingae (strain ATCC BAA-301 / DSM 14385 / NBRC 107922 / TMO) (Thermotoga lettingae).